A 465-amino-acid polypeptide reads, in one-letter code: Iron transporter FTH1 (465 aa).

Over 1 to 11 (MAFEDYFSFQI) the chain is Vacuolar. Residues 12 to 32 (FFIFLRESLEIVVIVSILLTI) form a helical membrane-spanning segment. The Cytoplasmic portion of the chain corresponds to 33–135 (VKQGLSVEDD…LYQKLKIQIL (103 aa)). Residues 44 to 66 (PFEGSSSSAGLPSPNTNTNADST) are disordered. Positions 46 to 66 (EGSSSSAGLPSPNTNTNADST) are enriched in polar residues. Residues 136–156 (AGGAFGLLLCMLIGGAFVSIF) traverse the membrane as a helical segment. The Vacuolar segment spans residues 157–170 (YHIGTDLWTLSEHY). The chain crosses the membrane as a helical span at residues 171–191 (YEGVLSLVASVIISVMGLFFL). Residues 192 to 289 (RMGKLREKFR…FFFRYSSSLS (98 aa)) are Cytoplasmic-facing. A helical transmembrane segment spans residues 290 to 310 (LKICLVVATCFLYLIAAGLFS). Over 311-358 (KGVWQLELQDYVNKCNGQDMSEVGNGPGSYDISRSVWHVNCCNGEKDG) the chain is Vacuolar. A helical membrane pass occupies residues 359–379 (GWMIFTAIFGWTNSATVGSVI). The Cytoplasmic portion of the chain corresponds to 380–465 (SYNAYWLVLI…LIIDSSGSAN (86 aa)). Residues 433-465 (TSELNSSTSEPDSQRRSKDSSVPLIIDSSGSAN) are disordered. Phosphoserine occurs at positions 449 and 453.

It belongs to the oxidase-dependent Fe transporter (OFeT) (TC 9.A.10.1) family. As to quaternary structure, interacts with FET5.

The protein localises to the vacuole membrane. High affinity iron transporter probably involved in transport of intravacuolar stores of iron. The polypeptide is Iron transporter FTH1 (FTH1) (Saccharomyces cerevisiae (strain ATCC 204508 / S288c) (Baker's yeast)).